The chain runs to 441 residues: Ribosomal protein uS12 methylthiotransferase RimO (441 aa).

Positions 8 to 118 constitute an MTTase N-terminal domain; the sequence is PKIGFVSLGC…VLEHVHHYVP (111 aa). [4Fe-4S] cluster is bound by residues C17, C53, C82, C150, C154, and C157. The region spanning 136-373 is the Radical SAM core domain; the sequence is LTPRHYAYLK…MQLQQQISAE (238 aa). Residues 376-441 enclose the TRAM domain; that stretch reads QEKVGREILV…DEYDLWGSRV (66 aa).

This sequence belongs to the methylthiotransferase family. RimO subfamily. Requires [4Fe-4S] cluster as cofactor.

Its subcellular location is the cytoplasm. The enzyme catalyses L-aspartate(89)-[ribosomal protein uS12]-hydrogen + (sulfur carrier)-SH + AH2 + 2 S-adenosyl-L-methionine = 3-methylsulfanyl-L-aspartate(89)-[ribosomal protein uS12]-hydrogen + (sulfur carrier)-H + 5'-deoxyadenosine + L-methionine + A + S-adenosyl-L-homocysteine + 2 H(+). Functionally, catalyzes the methylthiolation of an aspartic acid residue of ribosomal protein uS12. In Citrobacter koseri (strain ATCC BAA-895 / CDC 4225-83 / SGSC4696), this protein is Ribosomal protein uS12 methylthiotransferase RimO.